Reading from the N-terminus, the 375-residue chain is Esterase AN6793 (375 aa).

Positions 138-158 (RHPQPGLDPGHGHRHKRMPPL) are disordered.

The protein belongs to the sidJ hydrolase family. As to quaternary structure, homodimer.

The protein operates within secondary metabolite biosynthesis. Its function is as follows. Esterase; part of a cluster that mediates the biosynthesis of a yet undetermined secondary metabolite. With the HR-PKS AN6791, produces a pathway intermediate compound with molecular weight 258. The sequence is that of Esterase AN6793 from Emericella nidulans (strain FGSC A4 / ATCC 38163 / CBS 112.46 / NRRL 194 / M139) (Aspergillus nidulans).